The sequence spans 116 residues: Large ribosomal subunit protein bL19 (116 aa).

Belongs to the bacterial ribosomal protein bL19 family.

In terms of biological role, this protein is located at the 30S-50S ribosomal subunit interface and may play a role in the structure and function of the aminoacyl-tRNA binding site. This is Large ribosomal subunit protein bL19 from Staphylococcus epidermidis (strain ATCC 35984 / DSM 28319 / BCRC 17069 / CCUG 31568 / BM 3577 / RP62A).